Here is a 382-residue protein sequence, read N- to C-terminus: Alkane 1-monooxygenase 2 (382 aa).

The next 4 helical transmembrane spans lie at 17–37, 45–65, 88–108, and 114–134; these read GYLA…FVGV, WAWF…YLVG, VSAI…GHIF, and GLLG…IIAI. Fe cation is bound by residues His138, His142, His168, His172, and His173. Residues 236-256 form a helical membrane-spanning segment; that stretch reads ALFAATFGLLWGWQGVVFFLG. Residues His312, His315, and His316 each contribute to the Fe cation site.

It belongs to the fatty acid desaturase type 1 family. AlkB subfamily. It depends on Fe(3+) as a cofactor.

It localises to the cell inner membrane. The catalysed reaction is octane + 2 reduced [rubredoxin] + O2 + 2 H(+) = 2 oxidized [rubredoxin] + octan-1-ol + H2O. The protein operates within hydrocarbon metabolism; alkane degradation. Catalyzes the hydroxylation of n-alkanes in the presence of a NADH-rubredoxin reductase and rubredoxin. It preferably hydroxylases C8-C16 hydrocarbons. This Alcanivorax borkumensis (strain ATCC 700651 / DSM 11573 / NCIMB 13689 / SK2) protein is Alkane 1-monooxygenase 2 (alkB2).